The sequence spans 94 residues: Large ribosomal subunit protein eL31 (94 aa).

This sequence belongs to the eukaryotic ribosomal protein eL31 family.

In Pyrococcus abyssi (strain GE5 / Orsay), this protein is Large ribosomal subunit protein eL31 (rpl31e).